The chain runs to 1435 residues: MGARASVLSGGKLDAWEKIRLRPGGKKKYRLKHLVWASRELERFALNPGLLETPEGCLQIIEQIQPAIKTGTEELKSLFNLVAVLYCVHRKIDVKDTKEALDKIEEIQNKSQQKTQQAAADKEKDNKVSQNYPIVQNAQGQMVHQAISPRTLNAWVKVVEEKAFSPEVIPMFSALSEGATPQDLNAMLNTVGGHQAAMQMLKDTINEEAAEWDRVHPVHAGPIPPGQMREPRGSDIAGTTSTLQEQIAWMTGNPAIPVGDIYKRWIILGLNKIVRMYSPVSILDIKQGPKEPFRDYVDRFFKTLRAEQATQDVKNWMTETLLVQNANPDCKTILRALGQGASIEEMMTACQGVGGPSHKARVLAEAMSQVTNTNTAIMMQKGNFKGQRKFVKCFNCGKEGHIARNCRAPRKKGCWKCGREGHQMKDCTERQAKFFRENLAFQQREARKFSPEQARTNSPTSRELRVRRGDDPLSEAGAAEGQGTSLSFPQITLWQRPLVTVKIEGQLREALLDTGADDTVLEEINLPGKWKPKMIGGIGGFIKVRQYEQVAIEICGKKAIGTVLVGPTPVNIIGRNILTQIGCTLNFPISPIETVPVKLKPGMDGPKVKQWPLTEEKIKALTEICTEMEKEGKISRIGPENPYSTPIFAIKKKDSTKWRKLVDFRELNKRTQDFWEVQLGIPHPAGLKKKKSVSVLDVGDAYFSVPLDKEFRKYTAFTIPSINNETPGIRYQYNVLPQGWKGSPAIFQSSMTKILAPFREQNPEMVIYQYMDDLYVGSDLEIGQHRAKIEELRAHLLKWGFTTPDKKHQKEPPFLWMGYELHPDKWTVQTVKLPEKDSWTVNDIQKLVGKLNWASQIYPNIKVKQLCKLLRGAKALTDIIPLTKEAELELAENREILREPIHGVYYDPSKDLIAEIRKQGQGQWTYQIYQEPFKNLKTGKYAKMRTAHTNDIKQLTEAVQKISTESIVIWGKIPKFRLPIQKETWETWWTEYWQATWIPEWEFVNTPHLVKLWYQLETEPIAGAETYYIDGAANRETKLGKAGYVTDRGKQKVVSLTETTNQKTELQAIYLALQDSGLEVNIVTDSQYALGIIQAQPDKSESELVNQIIEELIKKEKVYLSWVPAHKGIGGNEQVDKLVSSGVRKVLFLDGIDKAQEEHERYHNNWRAVASDFNLPPIVAKEIVASCDKCQLKGEAMHGQVDCSPGIWQLDCTHLEGQVILVAVHVASGYIEAEVIPAETGKETAYFLLKLASRWPVKVIHTDNGSNFTSAAVKAACWWADIQQEFGIPYNPQSQGVVESMNKELKKIIGQVRDQAEHLKTAVQMAVFIHNFKRKGGIGGYSAGERIIDIIATDIQTKELQKQISNIQKFRVYYRDSRDPIWKGPAKLLWKGEGAVVIQDNSEIKVVPRREAKIIRDYGKQMAGDDCVASRQDED.

Gly-2 is lipidated: N-myristoyl glycine; by host. Positions 7-31 are interaction with Gp41; the sequence is VLSGGKLDAWEKIRLRPGGKKKYRL. The interaction with host CALM1 stretch occupies residues 8-43; the sequence is LSGGKLDAWEKIRLRPGGKKKYRLKHLVWASRELER. The tract at residues 12-19 is interaction with host AP3D1; it reads KLDAWEKI. The interval 14–33 is interaction with membrane phosphatidylinositol 4,5-bisphosphate and RNA; the sequence is DAWEKIRLRPGGKKKYRLKH. A Nuclear export signal motif is present at residues 16–22; it reads WEKIRLR. The Nuclear localization signal motif lies at 26–32; that stretch reads KKKYRLK. The interaction with membrane phosphatidylinositol 4,5-bisphosphate stretch occupies residues 73 to 77; it reads EELKS. Residues 108–127 form a disordered region; that stretch reads QNKSQQKTQQAAADKEKDNK. The span at 109–118 shows a compositional bias: polar residues; it reads NKSQQKTQQA. Tyr-132 carries the phosphotyrosine; by host modification. Positions 189–227 are interaction with human PPIA/CYPA and NUP153; sequence NTVGGHQAAMQMLKDTINEEAAEWDRVHPVHAGPIPPGQ. The dimerization/Multimerization of capsid protein p24 stretch occupies residues 277-363; the sequence is YSPVSILDIK…GGPSHKARVL (87 aa). 2 consecutive CCHC-type zinc fingers follow at residues 391-408 and 412-429; these read VKCF…NCRA and KGCW…DCTE. The segment at 445–482 is disordered; that stretch reads EARKFSPEQARTNSPTSRELRVRRGDDPLSEAGAAEGQ. Over residues 462-471 the composition is skewed to basic and acidic residues; the sequence is RELRVRRGDD. The dimerization of protease stretch occupies residues 489–493; it reads PQITL. One can recognise a Peptidase A2 domain in the interval 508–577; that stretch reads REALLDTGAD…TPVNIIGRNI (70 aa). The active-site For protease activity; shared with dimeric partner is Asp-513. Dimerization of protease regions lie at residues 537 to 543 and 576 to 588; these read GIGGFIK and NILT…LNFP. The 191-residue stretch at 631 to 821 folds into the Reverse transcriptase domain; that stretch reads EGKISRIGPE…PPFLWMGYEL (191 aa). The Mg(2+) site is built by Asp-697, Asp-772, and Asp-773. The segment at 814 to 822 is RT 'primer grip'; sequence FLWMGYELH. The Tryptophan repeat motif motif lies at 985–1001; that stretch reads WETWWTEYWQATWIPEW. The RNase H type-1 domain occupies 1021-1144; sequence IAGAETYYID…VDKLVSSGVR (124 aa). 4 residues coordinate Mg(2+): Asp-1030, Glu-1065, Asp-1085, and Asp-1136. The Integrase-type zinc-finger motif lies at 1150–1191; the sequence is DGIDKAQEEHERYHNNWRAVASDFNLPPIVAKEIVASCDKCQ. Zn(2+) is bound by residues His-1159, His-1163, Cys-1187, and Cys-1190. Residues 1201 to 1351 enclose the Integrase catalytic domain; it reads VDCSPGIWQL…SAGERIIDII (151 aa). Mg(2+)-binding residues include Asp-1211, Asp-1263, and Glu-1299. A DNA-binding region (integrase-type) is located at residues 1370–1417; sequence FRVYYRDSRDPIWKGPAKLLWKGEGAVVIQDNSEIKVVPRREAKIIRD.

Homotrimer; further assembles as hexamers of trimers. Interacts with gp41 (via C-terminus). Interacts with host CALM1; this interaction induces a conformational change in the Matrix protein, triggering exposure of the myristate group. Interacts with host AP3D1; this interaction allows the polyprotein trafficking to multivesicular bodies during virus assembly. Part of the pre-integration complex (PIC) which is composed of viral genome, matrix protein, Vpr and integrase. In terms of assembly, homodimer; the homodimer further multimerizes as homohexamers or homopentamers. Interacts with human PPIA/CYPA; This interaction stabilizes the capsid. Interacts with human NUP153. Interacts with host PDZD8; this interaction stabilizes the capsid. Interacts with monkey TRIM5; this interaction destabilizes the capsid. As to quaternary structure, homodimer, whose active site consists of two apposed aspartic acid residues. Heterodimer of p66 RT and p51 RT (RT p66/p51). Heterodimerization of RT is essential for DNA polymerase activity. The overall folding of the subdomains is similar in p66 RT and p51 RT but the spatial arrangements of the subdomains are dramatically different. In terms of assembly, homodimer; possibly can form homotetramer. Part of the pre-integration complex (PIC) which is composed of viral genome, matrix protein, Vpr and integrase. Interacts with human SMARCB1/INI1 and human PSIP1/LEDGF isoform 1. Interacts with human KPNA3; this interaction might play a role in nuclear import of the pre-integration complex. Interacts with human NUP153; this interaction might play a role in nuclear import of the pre-integration complex. It depends on Mg(2+) as a cofactor. Post-translationally, specific enzymatic cleavages by the viral protease yield mature proteins. The protease is released by autocatalytic cleavage. The polyprotein is cleaved during and after budding, this process is termed maturation. Proteolytic cleavage of p66 RT removes the RNase H domain to yield the p51 RT subunit. Nucleocapsid protein p7 might be further cleaved after virus entry. Tyrosine phosphorylated presumably in the virion by a host kinase. Phosphorylation is apparently not a major regulator of membrane association. In terms of processing, phosphorylated possibly by host MAPK1; this phosphorylation is necessary for Pin1-mediated virion uncoating. Post-translationally, methylated by host PRMT6, impairing its function by reducing RNA annealing and the initiation of reverse transcription.

It localises to the host cell membrane. Its subcellular location is the host endosome. The protein localises to the host multivesicular body. The protein resides in the virion membrane. It is found in the host nucleus. It localises to the host cytoplasm. Its subcellular location is the virion. It carries out the reaction Specific for a P1 residue that is hydrophobic, and P1' variable, but often Pro.. The enzyme catalyses Endohydrolysis of RNA in RNA/DNA hybrids. Three different cleavage modes: 1. sequence-specific internal cleavage of RNA. Human immunodeficiency virus type 1 and Moloney murine leukemia virus enzymes prefer to cleave the RNA strand one nucleotide away from the RNA-DNA junction. 2. RNA 5'-end directed cleavage 13-19 nucleotides from the RNA end. 3. DNA 3'-end directed cleavage 15-20 nucleotides away from the primer terminus.. It catalyses the reaction 3'-end directed exonucleolytic cleavage of viral RNA-DNA hybrid.. The catalysed reaction is DNA(n) + a 2'-deoxyribonucleoside 5'-triphosphate = DNA(n+1) + diphosphate. Its activity is regulated as follows. Protease: The viral protease is inhibited by many synthetic protease inhibitors (PIs), such as amprenavir, atazanavir, indinavir, loprinavir, nelfinavir, ritonavir and saquinavir. Use of protease inhibitors in tritherapy regimens permit more ambitious therapeutic strategies. Reverse transcriptase/ribonuclease H: RT can be inhibited either by nucleoside RT inhibitors (NRTIs) or by non nucleoside RT inhibitors (NNRTIs). NRTIs act as chain terminators, whereas NNRTIs inhibit DNA polymerization by binding a small hydrophobic pocket near the RT active site and inducing an allosteric change in this region. Classical NRTIs are abacavir, adefovir (PMEA), didanosine (ddI), lamivudine (3TC), stavudine (d4T), tenofovir (PMPA), zalcitabine (ddC), and zidovudine (AZT). Classical NNRTIs are atevirdine (BHAP U-87201E), delavirdine, efavirenz (DMP-266), emivirine (I-EBU), and nevirapine (BI-RG-587). The tritherapies used as a basic effective treatment of AIDS associate two NRTIs and one NNRTI. Its function is as follows. Mediates, with Gag polyprotein, the essential events in virion assembly, including binding the plasma membrane, making the protein-protein interactions necessary to create spherical particles, recruiting the viral Env proteins, and packaging the genomic RNA via direct interactions with the RNA packaging sequence (Psi). Gag-Pol polyprotein may regulate its own translation, by the binding genomic RNA in the 5'-UTR. At low concentration, the polyprotein would promote translation, whereas at high concentration, the polyprotein would encapsidate genomic RNA and then shut off translation. Functionally, targets the polyprotein to the plasma membrane via a multipartite membrane-binding signal, that includes its myristoylated N-terminus. Matrix protein is part of the pre-integration complex. Implicated in the release from host cell mediated by Vpu. Binds to RNA. In terms of biological role, forms the conical core that encapsulates the genomic RNA-nucleocapsid complex in the virion. Most core are conical, with only 7% tubular. The core is constituted by capsid protein hexamer subunits. The core is disassembled soon after virion entry. Host restriction factors such as TRIM5-alpha or TRIMCyp bind retroviral capsids and cause premature capsid disassembly, leading to blocks in reverse transcription. Capsid restriction by TRIM5 is one of the factors which restricts HIV-1 to the human species. Host PIN1 apparently facilitates the virion uncoating. On the other hand, interactions with PDZD8 or CYPA stabilize the capsid. Encapsulates and protects viral dimeric unspliced genomic RNA (gRNA). Binds these RNAs through its zinc fingers. Acts as a nucleic acid chaperone which is involved in rearangement of nucleic acid secondary structure during gRNA retrotranscription. Also facilitates template switch leading to recombination. As part of the polyprotein, participates in gRNA dimerization, packaging, tRNA incorporation and virion assembly. Its function is as follows. Aspartyl protease that mediates proteolytic cleavages of Gag and Gag-Pol polyproteins during or shortly after the release of the virion from the plasma membrane. Cleavages take place as an ordered, step-wise cascade to yield mature proteins. This process is called maturation. Displays maximal activity during the budding process just prior to particle release from the cell. Also cleaves Nef and Vif, probably concomitantly with viral structural proteins on maturation of virus particles. Hydrolyzes host EIF4GI and PABP1 in order to shut off the capped cellular mRNA translation. The resulting inhibition of cellular protein synthesis serves to ensure maximal viral gene expression and to evade host immune response. Also mediates cleavage of host YTHDF3. Mediates cleavage of host CARD8, thereby activating the CARD8 inflammasome, leading to the clearance of latent HIV-1 in patient CD4(+) T-cells after viral reactivation; in contrast, HIV-1 can evade CARD8-sensing when its protease remains inactive in infected cells prior to viral budding. Functionally, multifunctional enzyme that converts the viral RNA genome into dsDNA in the cytoplasm, shortly after virus entry into the cell. This enzyme displays a DNA polymerase activity that can copy either DNA or RNA templates, and a ribonuclease H (RNase H) activity that cleaves the RNA strand of RNA-DNA heteroduplexes in a partially processive 3' to 5' endonucleasic mode. Conversion of viral genomic RNA into dsDNA requires many steps. A tRNA(3)-Lys binds to the primer-binding site (PBS) situated at the 5'-end of the viral RNA. RT uses the 3' end of the tRNA primer to perform a short round of RNA-dependent minus-strand DNA synthesis. The reading proceeds through the U5 region and ends after the repeated (R) region which is present at both ends of viral RNA. The portion of the RNA-DNA heteroduplex is digested by the RNase H, resulting in a ssDNA product attached to the tRNA primer. This ssDNA/tRNA hybridizes with the identical R region situated at the 3' end of viral RNA. This template exchange, known as minus-strand DNA strong stop transfer, can be either intra- or intermolecular. RT uses the 3' end of this newly synthesized short ssDNA to perform the RNA-dependent minus-strand DNA synthesis of the whole template. RNase H digests the RNA template except for two polypurine tracts (PPTs) situated at the 5'-end and near the center of the genome. It is not clear if both polymerase and RNase H activities are simultaneous. RNase H probably can proceed both in a polymerase-dependent (RNA cut into small fragments by the same RT performing DNA synthesis) and a polymerase-independent mode (cleavage of remaining RNA fragments by free RTs). Secondly, RT performs DNA-directed plus-strand DNA synthesis using the PPTs that have not been removed by RNase H as primers. PPTs and tRNA primers are then removed by RNase H. The 3' and 5' ssDNA PBS regions hybridize to form a circular dsDNA intermediate. Strand displacement synthesis by RT to the PBS and PPT ends produces a blunt ended, linear dsDNA copy of the viral genome that includes long terminal repeats (LTRs) at both ends. In terms of biological role, catalyzes viral DNA integration into the host chromosome, by performing a series of DNA cutting and joining reactions. This enzyme activity takes place after virion entry into a cell and reverse transcription of the RNA genome in dsDNA. The first step in the integration process is 3' processing. This step requires a complex comprising the viral genome, matrix protein, Vpr and integrase. This complex is called the pre-integration complex (PIC). The integrase protein removes 2 nucleotides from each 3' end of the viral DNA, leaving recessed CA OH's at the 3' ends. In the second step, the PIC enters cell nucleus. This process is mediated through integrase and Vpr proteins, and allows the virus to infect a non dividing cell. This ability to enter the nucleus is specific of lentiviruses, other retroviruses cannot and rely on cell division to access cell chromosomes. In the third step, termed strand transfer, the integrase protein joins the previously processed 3' ends to the 5' ends of strands of target cellular DNA at the site of integration. The 5'-ends are produced by integrase-catalyzed staggered cuts, 5 bp apart. A Y-shaped, gapped, recombination intermediate results, with the 5'-ends of the viral DNA strands and the 3' ends of target DNA strands remaining unjoined, flanking a gap of 5 bp. The last step is viral DNA integration into host chromosome. This involves host DNA repair synthesis in which the 5 bp gaps between the unjoined strands are filled in and then ligated. Since this process occurs at both cuts flanking the HIV genome, a 5 bp duplication of host DNA is produced at the ends of HIV-1 integration. Alternatively, Integrase may catalyze the excision of viral DNA just after strand transfer, this is termed disintegration. This is Gag-Pol polyprotein (gag-pol) from Homo sapiens (Human).